Here is a 189-residue protein sequence, read N- to C-terminus: Small ribosomal subunit protein uS5 (189 aa).

The 64-residue stretch at Phe22 to Val85 folds into the S5 DRBM domain.

This sequence belongs to the universal ribosomal protein uS5 family. As to quaternary structure, part of the 30S ribosomal subunit. Contacts proteins S4 and S8.

Functionally, with S4 and S12 plays an important role in translational accuracy. Its function is as follows. Located at the back of the 30S subunit body where it stabilizes the conformation of the head with respect to the body. The polypeptide is Small ribosomal subunit protein uS5 (Sinorhizobium fredii (strain NBRC 101917 / NGR234)).